A 1203-amino-acid polypeptide reads, in one-letter code: Metabotropic glutamate receptor 5 (1203 aa).

The signal sequence occupies residues 1–18 (MVLLLILSVLLLKEDVRG). Residues 19–579 (SAQSSERRVV…QYLRWGDPEP (561 aa)) are Extracellular-facing. A disulfide bond links C57 and C99. Y64 serves as a coordination point for L-glutamate. An N-linked (GlcNAc...) asparagine glycan is attached at N88. L-glutamate contacts are provided by residues S151 and 172–174 (SAT). N209 carries an N-linked (GlcNAc...) asparagine glycan. Residue Y222 participates in L-glutamate binding. Intrachain disulfides connect C240/C529, C275/C277, C364/C380, C418/C425, C510/C530, C514/C533, C536/C548, and C551/C564. D304 is a binding site for L-glutamate. N-linked (GlcNAc...) asparagine glycans are attached at residues N377 and N381. K395 is an L-glutamate binding site. N-linked (GlcNAc...) asparagine glycosylation is present at N444. A helical membrane pass occupies residues 580–602 (IAAVVFACLGLLATLFVTVIFII). The Cytoplasmic portion of the chain corresponds to 603-612 (YRDTPVVKSS). Residues 613–635 (SRELCYIILAGICLGYLCTFCLI) form a helical membrane-spanning segment. Over 636–643 (AKPKQIYC) the chain is Extracellular. C643 and C732 are oxidised to a cystine. A helical transmembrane segment spans residues 644-666 (YLQRIGIGLSPAMSYSALVTKTN). Over 667–692 (RIARILAGSKKKICTKKPRFMSACAQ) the chain is Cytoplasmic. The helical transmembrane segment at 693–713 (LVIAFILICIQLGIIVALFIM) threads the bilayer. Residues 714 to 736 (EPPDIMHDYPSIREVYLICNTTN) are Extracellular-facing. The N-linked (GlcNAc...) asparagine glycan is linked to N733. Residues 737 to 758 (LGVVTPLGYNGLLILSCTFYAF) traverse the membrane as a helical segment. Residues 759 to 771 (KTRNVPANFNEAK) lie on the Cytoplasmic side of the membrane. Residues 772–794 (YIAFTMYTTCIIWLAFVPIYFGS) form a helical membrane-spanning segment. The Extracellular portion of the chain corresponds to 795-797 (NYK). Residues 798–819 (IITMCFSVSLSATVALGCMFVP) traverse the membrane as a helical segment. At 820-1203 (KVYIILAKPE…RDYTQSSSSL (384 aa)) the chain is on the cytoplasmic side. Position 860 is a phosphoserine (S860). Position 868 is an omega-N-methylarginine (R868). Disordered regions lie at residues 892-1054 (FTPK…GSLM) and 1120-1182 (TGGA…ALCI). The span at 905 to 920 (TMSSSNGKSVTWAQNE) shows a compositional bias: polar residues. R924 is subject to Omega-N-methylarginine. Positions 960-977 (QGAGAGGGSGPGAAGAGS) are enriched in gly residues. Over residues 1007 to 1019 (PAAARPRSPSPIS) the composition is skewed to low complexity. A phosphoserine mark is found at S1014 and S1016. Polar residues-rich tracts occupy residues 1039-1054 (HSET…GSLM) and 1165-1176 (DSGSTTPNSPVS).

Belongs to the G-protein coupled receptor 3 family. The PPXXF motif binds HOMER1, HOMER2 and HOMER3. Interacts with RYR1, RYR2, ITPR1, SHANK1 and SHANK3. Interacts with SIAH1 and TAMALIN. Interacts with NCDN. Interacts with NECAB2. Interacts with CAMK2A.

It localises to the cell membrane. In terms of biological role, G-protein coupled receptor for glutamate. Ligand binding causes a conformation change that triggers signaling via guanine nucleotide-binding proteins (G proteins) and modulates the activity of down-stream effectors. Signaling activates a phosphatidylinositol-calcium second messenger system and generates a calcium-activated chloride current. Plays an important role in the regulation of synaptic plasticity and the modulation of the neural network activity. This chain is Metabotropic glutamate receptor 5 (Grm5), found in Mus musculus (Mouse).